Consider the following 1188-residue polypeptide: DNA-directed RNA polymerase subunit beta (1188 aa).

Belongs to the RNA polymerase beta chain family. The RNAP catalytic core consists of 2 alpha, 1 beta, 1 beta' and 1 omega subunit. When a sigma factor is associated with the core the holoenzyme is formed, which can initiate transcription.

The enzyme catalyses RNA(n) + a ribonucleoside 5'-triphosphate = RNA(n+1) + diphosphate. DNA-dependent RNA polymerase catalyzes the transcription of DNA into RNA using the four ribonucleoside triphosphates as substrates. The sequence is that of DNA-directed RNA polymerase subunit beta from Streptococcus gordonii (strain Challis / ATCC 35105 / BCRC 15272 / CH1 / DL1 / V288).